The chain runs to 179 residues: MARLKEIYRNEIAPKLKEELKLSNVMEVPRVTKITLNMGLGEAIGDKKVIEHAVADLEKITGQKPVVTFARKSIAGFKVREGWPIGVKVTLRREKMYEFLDRLLAISLPRVRDFRGLNAKSFDGRGNYSMGVKEQIIFPEIDYDKIDALRGLDITLTTTARSDDEGRALLRAFKFPFRN.

This sequence belongs to the universal ribosomal protein uL5 family. In terms of assembly, part of the 50S ribosomal subunit; part of the 5S rRNA/L5/L18/L25 subcomplex. Contacts the 5S rRNA and the P site tRNA. Forms a bridge to the 30S subunit in the 70S ribosome.

Functionally, this is one of the proteins that bind and probably mediate the attachment of the 5S RNA into the large ribosomal subunit, where it forms part of the central protuberance. In the 70S ribosome it contacts protein S13 of the 30S subunit (bridge B1b), connecting the 2 subunits; this bridge is implicated in subunit movement. Contacts the P site tRNA; the 5S rRNA and some of its associated proteins might help stabilize positioning of ribosome-bound tRNAs. The protein is Large ribosomal subunit protein uL5 of Pseudomonas putida (strain W619).